Here is a 1442-residue protein sequence, read N- to C-terminus: ABC transporter G family member 35 (1442 aa).

In terms of domain architecture, ABC transporter 1 spans 169 to 442; sequence LGMIGIRLAK…FESFGFKCPE (274 aa). Residue 202-209 participates in ATP binding; that stretch reads GPPSSGKT. An ABC transmembrane type-2 1 domain is found at 520–733; it reads ELLKSCWDKE…AFNAITVNEL (214 aa). A run of 7 helical transmembrane segments spans residues 538-558, 573-593, 619-639, 657-677, 683-703, 714-734, and 769-789; these read FFYVFKTVQIIIIAAITSTLY, IYVGSLLFAMIVNMFNGLAEM, LPTFLLGIPISIFESTAWMVV, FLIIFLIQQMAAGIFRFIAST, IANTGGVLVLLVVFLTGGFLL, WAYWISPLSYAFNAITVNELF, and IGVGGLLGFTVIFNGFFTLAL. The 253-residue stretch at 840 to 1092 folds into the ABC transporter 2 domain; it reads MSFDDVKYFV…KVVEYFESFP (253 aa). 885–892 serves as a coordination point for ATP; sequence GVSGAGKT. One can recognise an ABC transmembrane type-2 2 domain in the interval 1165 to 1379; sequence GQFKSCLWKQ…TIYGLITSQY (215 aa). The next 7 membrane-spanning stretches (helical) occupy residues 1186–1206, 1218–1238, 1272–1292, 1299–1319, 1329–1349, 1357–1377, and 1414–1434; these read LVRFIFTLATSLMIGSVFWQI, MVIGAIYAAVVFVGINNCSTV, LPYVLIQTTYYSLIIYSMVGF, FLWFIFINYFSFLYWTYYGMM, VASIFASAFYGIFNLFSGFFI, WWVWYYWICPVAWTIYGLITS, and PVAGVLVGFTVFFAFIFAFCI.

Belongs to the ABC transporter superfamily. ABCG family. PDR (TC 3.A.1.205) subfamily. Ubiquitous with higher levels in roots.

It is found in the membrane. In terms of biological role, may be a general defense protein. The polypeptide is ABC transporter G family member 35 (ABCG35) (Arabidopsis thaliana (Mouse-ear cress)).